Consider the following 180-residue polypeptide: MKCLLLALGLALACGIQAIIVTQTMKGLDIQKVAGTWYSLAMAASDISLLDAQSAPLRVYVEELKPTPEGNLEILLQKWENGECAQKKIIAEKTKIPAVFKIDALNENKVLVLDTDYKKYLLFCMENSAEPEQSLACQCLVRTPEVDKEALEKFDKALKALPMHIRLAFNPTQLEGQCHV.

The first 18 residues, 1–18, serve as a signal peptide directing secretion; it reads MKCLLLALGLALACGIQA. 3 disulfides stabilise this stretch: Cys84/Cys178, Cys124/Cys137, and Cys124/Cys139.

This sequence belongs to the calycin superfamily. Lipocalin family. Under physiological conditions beta-lactoglobulin exists as an equilibrium mixture of monomeric and dimeric forms. Interaction with LMBR1L is controversial. In terms of processing, alternate disulfide bonds occur in equal amounts. Synthesized in mammary gland and secreted in milk.

It is found in the secreted. Functionally, primary component of whey, it binds retinol and is probably involved in the transport of that molecule. This is Beta-lactoglobulin (LGB) from Capra hircus (Goat).